The chain runs to 80 residues: NADH-ubiquinone oxidoreductase chain 5 (80 aa).

Transmembrane regions (helical) follow at residues 4 to 24 (ISFLVLVSISFSMFLLSLNFM) and 44 to 64 (IVMTFLFDWMSLLFMSFVLLI).

It belongs to the complex I subunit 5 family.

It localises to the mitochondrion inner membrane. It catalyses the reaction a ubiquinone + NADH + 5 H(+)(in) = a ubiquinol + NAD(+) + 4 H(+)(out). Functionally, core subunit of the mitochondrial membrane respiratory chain NADH dehydrogenase (Complex I) that is believed to belong to the minimal assembly required for catalysis. Complex I functions in the transfer of electrons from NADH to the respiratory chain. The immediate electron acceptor for the enzyme is believed to be ubiquinone. The polypeptide is NADH-ubiquinone oxidoreductase chain 5 (ND5) (Ceratitis capitata (Mediterranean fruit fly)).